Consider the following 291-residue polypeptide: ATP synthase gamma chain (291 aa).

This sequence belongs to the ATPase gamma chain family. As to quaternary structure, F-type ATPases have 2 components, CF(1) - the catalytic core - and CF(0) - the membrane proton channel. CF(1) has five subunits: alpha(3), beta(3), gamma(1), delta(1), epsilon(1). CF(0) has three main subunits: a, b and c.

The protein resides in the cell inner membrane. Its function is as follows. Produces ATP from ADP in the presence of a proton gradient across the membrane. The gamma chain is believed to be important in regulating ATPase activity and the flow of protons through the CF(0) complex. The chain is ATP synthase gamma chain from Xanthobacter autotrophicus (strain ATCC BAA-1158 / Py2).